Reading from the N-terminus, the 251-residue chain is Coproheme decarboxylase (251 aa).

Residues R133, 147-151, H174, Q187, and S225 each bind Fe-coproporphyrin III; that span reads YPMSK. Y147 is an active-site residue.

Belongs to the ChdC family. Type 1 subfamily. Fe-coproporphyrin III is required as a cofactor.

It carries out the reaction Fe-coproporphyrin III + 2 H2O2 + 2 H(+) = heme b + 2 CO2 + 4 H2O. It catalyses the reaction Fe-coproporphyrin III + H2O2 + H(+) = harderoheme III + CO2 + 2 H2O. The enzyme catalyses harderoheme III + H2O2 + H(+) = heme b + CO2 + 2 H2O. Its pathway is porphyrin-containing compound metabolism; protoheme biosynthesis. Functionally, involved in coproporphyrin-dependent heme b biosynthesis. Catalyzes the decarboxylation of Fe-coproporphyrin III (coproheme) to heme b (protoheme IX), the last step of the pathway. The reaction occurs in a stepwise manner with a three-propionate intermediate. The chain is Coproheme decarboxylase from Listeria monocytogenes serotype 4b (strain CLIP80459).